The chain runs to 525 residues: Eukaryotic translation initiation factor 3 subunit E (525 aa).

Basic and acidic residues predominate over residues 102–120; that stretch reads QKELKEQQKEQQKEKDTDK. Residues 102 to 143 are disordered; it reads QKELKEQQKEQQKEKDTDKTTPTTTDETTTTTTTAPTTTTTT. A compositionally biased stretch (low complexity) spans 121-143; it reads TTPTTTDETTTTTTTAPTTTTTT. The region spanning 261–440 is the PCI domain; the sequence is VYFYNPESRS…NQIKMFTQHN (180 aa). Residues 463–525 form a disordered region; it reads INESRSQQNR…TTTTATPTSA (63 aa). The segment covering 482–525 has biased composition (low complexity); the sequence is RGQNRNQQNQQNQQSNESNETTTTTTTAAAATTTTTTTATPTSA.

It belongs to the eIF-3 subunit E family. As to quaternary structure, component of the eukaryotic translation initiation factor 3 (eIF-3) complex.

It is found in the cytoplasm. Component of the eukaryotic translation initiation factor 3 (eIF-3) complex, which is involved in protein synthesis of a specialized repertoire of mRNAs and, together with other initiation factors, stimulates binding of mRNA and methionyl-tRNAi to the 40S ribosome. The eIF-3 complex specifically targets and initiates translation of a subset of mRNAs involved in cell proliferation. This is Eukaryotic translation initiation factor 3 subunit E (eif3E) from Dictyostelium discoideum (Social amoeba).